A 227-amino-acid polypeptide reads, in one-letter code: Myogenin (227 aa).

The region spanning 82–133 (DRRRAATLREKRRLKKVNEAFEALKRSTLLNPNQRLPKVEILRSAIQYIERL) is the bHLH domain. The interval 147 to 196 (QRELRYRPAAPQPAAPSECGSGSSSCSPEWSTQLEFGTNPADHLLSDDQA) is disordered. The span at 161–175 (APSECGSGSSSCSPE) shows a compositional bias: low complexity.

As to quaternary structure, homodimer and heterodimer. Efficient DNA binding requires dimerization with another bHLH protein.

Its subcellular location is the nucleus. Its function is as follows. Acts as a transcriptional activator that promotes transcription of muscle-specific target genes and plays a role in muscle differentiation. Induces fibroblasts to differentiate into myoblasts. Probable sequence specific DNA-binding protein. In Gallus gallus (Chicken), this protein is Myogenin (MYOG).